Consider the following 137-residue polypeptide: Nucleoside diphosphate kinase (137 aa).

ATP-binding residues include Lys9, Phe57, Arg85, Thr91, Arg102, and Asn112. The Pros-phosphohistidine intermediate role is filled by His115.

It belongs to the NDK family. As to quaternary structure, homotetramer. Mg(2+) serves as cofactor.

Its subcellular location is the cytoplasm. It catalyses the reaction a 2'-deoxyribonucleoside 5'-diphosphate + ATP = a 2'-deoxyribonucleoside 5'-triphosphate + ADP. It carries out the reaction a ribonucleoside 5'-diphosphate + ATP = a ribonucleoside 5'-triphosphate + ADP. Its function is as follows. Major role in the synthesis of nucleoside triphosphates other than ATP. The ATP gamma phosphate is transferred to the NDP beta phosphate via a ping-pong mechanism, using a phosphorylated active-site intermediate. The sequence is that of Nucleoside diphosphate kinase from Desulfotalea psychrophila (strain LSv54 / DSM 12343).